We begin with the raw amino-acid sequence, 630 residues long: Probable potassium transport system protein Kup (630 aa).

12 helical membrane passes run 17 to 37, 51 to 71, 105 to 125, 144 to 164, 175 to 195, 218 to 238, 255 to 275, 283 to 303, 344 to 364, 374 to 394, 402 to 422, and 428 to 448; these read LAIA…LYSL, PSAI…VVGI, ITGL…GDAV, PQLS…LFWI, LFGP…IYHI, VLLA…AEAL, YVLV…LLLL, PFFL…STVA, IYVP…VIGF, YGIA…VVMV, LLVA…FGAN, and QGGW…MTWY.

Belongs to the HAK/KUP transporter (TC 2.A.72) family.

It localises to the cell inner membrane. The catalysed reaction is K(+)(in) + H(+)(in) = K(+)(out) + H(+)(out). In terms of biological role, transport of potassium into the cell. Likely operates as a K(+):H(+) symporter. This is Probable potassium transport system protein Kup from Burkholderia pseudomallei (strain K96243).